Consider the following 496-residue polypeptide: MEEQREALRKIIKTLAVKNEEIQSFIYSLKQMLLNVEANSAKVQEDLEAEFQSLFSLLEELKEGMLMKIKQDRASRTYELQNQLAACTRALESSEELLETANQTLQAMDSEDFPQAAKQIKDGVTMAPAFRLSLKAKVSDNMSHLMVDFAQERQMLQALKFLPVPSAPVIDLAESLVADNCVTLVWRMPDEDSKIDHYVLEYRRTNFEGPPRLKEDQPWMVIEGIRQTEYTLTGLKFDMKYMNFRVKACNKAVAGEFSEPVTLETPAFMFRLDASTSHQNLRVDDLSVEWDAMGGKVQDIKAREKDGKGRTASPINSPARGTPSPKRMPSGRGGRDRFTAESYTVLGDTLIDGGEHYWEVRYEPDSKAFGVGVAYRSLGRFEQLGKTAASWCLHVNNWLQVSFTAKHANKVKVLDAPVPDCLGVHCDFHQGLLSFYNARTKQVLHTFKTRFTQPLLPAFTVWCGSFQVTTGLQVPSAVRCLQKRGSATSSSNTSLT.

Residues 4–99 (QREALRKIIK…ALESSEELLE (96 aa)) adopt a coiled-coil conformation. The region spanning 105-162 (LQAMDSEDFPQAAKQIKDGVTMAPAFRLSLKAKVSDNMSHLMVDFAQERQMLQALKFL) is the COS domain. Positions 164–268 (VPSAPVIDLA…EPVTLETPAF (105 aa)) constitute a Fibronectin type-III domain. The B30.2/SPRY domain maps to 268-477 (FMFRLDASTS…VTTGLQVPSA (210 aa)). The disordered stretch occupies residues 301-336 (KAREKDGKGRTASPINSPARGTPSPKRMPSGRGGRD). Omega-N-methylarginine is present on residues arginine 310 and arginine 320.

As to quaternary structure, oligomerization is required for binding to microtubules. In terms of tissue distribution, highly expressed in brain tissues, including cerebellum, cerebral cortex, medulla, occipital pole, frontal lobe, temporal lobe and putamen. Lower expression in spinal cord.

Its subcellular location is the cytoplasm. The protein resides in the cytoskeleton. It localises to the microtubule organizing center. The protein localises to the centrosome. It is found in the nucleus. Its subcellular location is the cleavage furrow. Its function is as follows. May be involved in microtubule organization and stabilization. The sequence is that of Fibronectin type III and SPRY domain-containing protein 1 (FSD1) from Homo sapiens (Human).